Here is a 114-residue protein sequence, read N- to C-terminus: uncharacterized protein (114 aa).

The protein to E.coli YfiI and P.aeruginosa RluD.

This is an uncharacterized protein from Escherichia coli O6:H1 (strain CFT073 / ATCC 700928 / UPEC).